Consider the following 208-residue polypeptide: Holliday junction resolvase RecU (208 aa).

The segment at Met-1–Glu-28 is disordered. Thr-87, Asp-89, Glu-102, and Gln-121 together coordinate Mg(2+).

Belongs to the RecU family. Mg(2+) serves as cofactor.

The protein localises to the cytoplasm. The enzyme catalyses Endonucleolytic cleavage at a junction such as a reciprocal single-stranded crossover between two homologous DNA duplexes (Holliday junction).. Functionally, endonuclease that resolves Holliday junction intermediates in genetic recombination. Cleaves mobile four-strand junctions by introducing symmetrical nicks in paired strands. Promotes annealing of linear ssDNA with homologous dsDNA. Required for DNA repair, homologous recombination and chromosome segregation. This is Holliday junction resolvase RecU from Staphylococcus epidermidis (strain ATCC 12228 / FDA PCI 1200).